Reading from the N-terminus, the 341-residue chain is MAANSGGRSSDADGGPQRHIPVLLREVIAALEPAPGKIILDGTFGAGGYTQAILDQGANVIALDRDPTAIAGGEAMVVANGGRLSLIQSQFSDLAKHAPEDGLDGVVLDIGVSSMQIDEAERGFSFQKNGPLDMRMSASGVSAADVVNRAKVGDLIRIFGFLGEEKQPGRIARAIEKKRAEEPFRTTRDLAGLIEIVTPRKAKDKIHPATRVFQALRVFVNDELGELAQALFAAERSLKPGGRLVVVTFHSLEDRIVKKFFSDRSGKAAGSRHLPMVEDKPAIFENIGKPMIAASDEEAELNPRARSAKLRAGLRTTAPARAADFSIFELPDLASLEKMGG.

Residues 47–49 (GGY), D64, F91, D109, and Q116 contribute to the S-adenosyl-L-methionine site.

This sequence belongs to the methyltransferase superfamily. RsmH family.

It localises to the cytoplasm. The enzyme catalyses cytidine(1402) in 16S rRNA + S-adenosyl-L-methionine = N(4)-methylcytidine(1402) in 16S rRNA + S-adenosyl-L-homocysteine + H(+). Functionally, specifically methylates the N4 position of cytidine in position 1402 (C1402) of 16S rRNA. The protein is Ribosomal RNA small subunit methyltransferase H of Agrobacterium fabrum (strain C58 / ATCC 33970) (Agrobacterium tumefaciens (strain C58)).